The sequence spans 439 residues: MKFYIRTFGCQMNINESEIMAGLLKEEGFEWTENPKEADIILINSCAVREKAENKMYGAIGGYGKLKDENKNLILGVGGCSAEKERENLLERFKNIDFVFGTRNVVDIGNLVKRALNGKRFADFSDKLNDVNYDIPKMPISKHHAWITIIYGCNKYCSYCIVPYTRGFEKSRPMEDIIREVESYAKKGYKEITFLGQNVDSYGKDFGDKKSKLDLLIQKAAEFDSIKRIWFLTSYPSDITDSLIQTVANEEKAANYFHLPAQSGSNKILKAMNRKYTREEFIELVNKVKKEVANVTVSSDFITGFPSETDEDFEETVDLIKQCRFERINIAEYSPREGTIAYKYQNDDVPKHIKNKRLQYLMELQKRINLEENEKYLEQEVVIIQEGKAGKNGTYMGRTMNNKLIIFESNEELNGEFLKVKVNKITPGPLYGEVVNNLY.

Residues 1–117 form the MTTase N-terminal domain; that stretch reads MKFYIRTFGC…IGNLVKRALN (117 aa). Residues Cys10, Cys46, Cys80, Cys153, Cys157, and Cys160 each contribute to the [4Fe-4S] cluster site. The region spanning 139 to 371 is the Radical SAM core domain; it reads PISKHHAWIT…MELQKRINLE (233 aa). The TRAM domain occupies 369–436; it reads NLEENEKYLE…PGPLYGEVVN (68 aa).

The protein belongs to the methylthiotransferase family. MiaB subfamily. As to quaternary structure, monomer. [4Fe-4S] cluster serves as cofactor.

The protein resides in the cytoplasm. The enzyme catalyses N(6)-dimethylallyladenosine(37) in tRNA + (sulfur carrier)-SH + AH2 + 2 S-adenosyl-L-methionine = 2-methylsulfanyl-N(6)-dimethylallyladenosine(37) in tRNA + (sulfur carrier)-H + 5'-deoxyadenosine + L-methionine + A + S-adenosyl-L-homocysteine + 2 H(+). Catalyzes the methylthiolation of N6-(dimethylallyl)adenosine (i(6)A), leading to the formation of 2-methylthio-N6-(dimethylallyl)adenosine (ms(2)i(6)A) at position 37 in tRNAs that read codons beginning with uridine. The polypeptide is tRNA-2-methylthio-N(6)-dimethylallyladenosine synthase (Petrotoga mobilis (strain DSM 10674 / SJ95)).